The chain runs to 648 residues: MDSENSSSHSISSPQMFQNTHNNSAMEDNLLSRPMNNESLQMIIGYLRRNGLTETEELLTREAGPVLRVEGSNGLPPEEAISVEFDTFVQHANDCTDVVQAEFSQLLFPIFAHSYIALIEKHAATARIFFNRFKIFIPECFSEFVYQLSLIEDAMTLRANEHVHILRENKFLVRLSRPTLKHLESIQTRVIGVKNIIAKHICIENADEVSTNRTTIETQMGGILGVTSKSDKRHKMMFSVLKDELMQNIEKRKTKGKDWKDMGKKMQTHCPQADRIPLPPISEHLREERRNWLRDVGKMAIISAESPVSICMYTTVNAPIGVASCDFTDDSSLIAMGLSDSSIVMNAMDPMNKMKKLRDMEFLDKIDIETADNVQSQMFDLQGSTTSVRYTGHGGPVFSVNFSPDRRLLISSAGDRTVRLWSMETQRNAVIYRTPAVVWQAQFCSRGYYFATASADKTAAMWSTDRMHPLRIFADPYGDVGCIDYHPNCNYIAGGSDDRYVRVWDVCSGTRVRIFSGHKASIIAVKFSPCGRYIVSLDAIGNLMIWDLAYQRLVAAEITEQAGTKGSITFSRDGGVFAVSHGNSSIQLYSLDTLIGTVLAAGQNDSYIEPKVNLDGFNIGSYATKETAVIGLHFTRRNLLLGFGCFGQ.

Low complexity predominate over residues 1–13 (MDSENSSSHSISS). A disordered region spans residues 1–21 (MDSENSSSHSISSPQMFQNTH). The LisH domain occupies 35–67 (MNNESLQMIIGYLRRNGLTETEELLTREAGPVL). WD repeat units lie at residues 317 to 358 (NAPI…KKLR), 392 to 431 (GHGG…NAVI), 433 to 472 (RTPA…PLRI), 475 to 514 (DPYG…RVRI), 517 to 556 (GHKA…LVAA), and 560 to 599 (EQAG…GTVL).

This sequence belongs to the WD repeat TAF5 family. Component of the TFIID basal transcription factor complex, composed of TATA-box-binding protein tbp-1, and a number of TBP-associated factors (TAFs).

Its subcellular location is the nucleus. Its function is as follows. The TFIID basal transcription factor complex plays a major role in the initiation of RNA polymerase II (Pol II)-dependent transcription. TFIID recognizes and binds promoters via its subunit tbp-1, a TATA-box-binding protein, and promotes assembly of the pre-initiation complex (PIC). The TFIID complex consists of tbp-1 and TBP-associated factors (TAFs), including taf-5. Essential for early embryonic development, but not required for transcription of some genes; probably acts via activating transcription initiation by RNA Pol II, as part of the TFIID complex. The protein is Transcription initiation factor TFIID subunit 5 of Caenorhabditis elegans.